The chain runs to 172 residues: Adenine phosphoribosyltransferase (172 aa).

The protein belongs to the purine/pyrimidine phosphoribosyltransferase family. In terms of assembly, homodimer.

The protein localises to the cytoplasm. It catalyses the reaction AMP + diphosphate = 5-phospho-alpha-D-ribose 1-diphosphate + adenine. The protein operates within purine metabolism; AMP biosynthesis via salvage pathway; AMP from adenine: step 1/1. Its function is as follows. Catalyzes a salvage reaction resulting in the formation of AMP, that is energically less costly than de novo synthesis. This chain is Adenine phosphoribosyltransferase, found in Clostridium kluyveri (strain NBRC 12016).